We begin with the raw amino-acid sequence, 452 residues long: Bifunctional protein GlmU (452 aa).

Residues 1 to 226 are pyrophosphorylase; it reads MSLTTVILAA…PMEVEGANNR (226 aa). Residues 8–11, Lys-22, Gln-73, 78–79, 100–102, Gly-137, Glu-151, Asn-166, and Asn-224 each bind UDP-N-acetyl-alpha-D-glucosamine; these read LAAG, GT, and YGD. Residue Asp-102 participates in Mg(2+) binding. Asn-224 is a binding site for Mg(2+). The segment at 227–247 is linker; it reads IQLAGLERAYQAWQAQELMLN. The segment at 248–452 is N-acetyltransferase; that stretch reads GATLADPARI…LDGWKRPVKK (205 aa). UDP-N-acetyl-alpha-D-glucosamine is bound by residues Arg-330 and Lys-348. The Proton acceptor role is filled by His-360. UDP-N-acetyl-alpha-D-glucosamine contacts are provided by Tyr-363 and Asn-374. Acetyl-CoA contacts are provided by residues Ala-377, 383 to 384, Ser-402, Ala-420, and Arg-437; that span reads NY.

In the N-terminal section; belongs to the N-acetylglucosamine-1-phosphate uridyltransferase family. This sequence in the C-terminal section; belongs to the transferase hexapeptide repeat family. In terms of assembly, homotrimer. Mg(2+) serves as cofactor.

It localises to the cytoplasm. The catalysed reaction is alpha-D-glucosamine 1-phosphate + acetyl-CoA = N-acetyl-alpha-D-glucosamine 1-phosphate + CoA + H(+). The enzyme catalyses N-acetyl-alpha-D-glucosamine 1-phosphate + UTP + H(+) = UDP-N-acetyl-alpha-D-glucosamine + diphosphate. It functions in the pathway nucleotide-sugar biosynthesis; UDP-N-acetyl-alpha-D-glucosamine biosynthesis; N-acetyl-alpha-D-glucosamine 1-phosphate from alpha-D-glucosamine 6-phosphate (route II): step 2/2. The protein operates within nucleotide-sugar biosynthesis; UDP-N-acetyl-alpha-D-glucosamine biosynthesis; UDP-N-acetyl-alpha-D-glucosamine from N-acetyl-alpha-D-glucosamine 1-phosphate: step 1/1. Its pathway is bacterial outer membrane biogenesis; LPS lipid A biosynthesis. Catalyzes the last two sequential reactions in the de novo biosynthetic pathway for UDP-N-acetylglucosamine (UDP-GlcNAc). The C-terminal domain catalyzes the transfer of acetyl group from acetyl coenzyme A to glucosamine-1-phosphate (GlcN-1-P) to produce N-acetylglucosamine-1-phosphate (GlcNAc-1-P), which is converted into UDP-GlcNAc by the transfer of uridine 5-monophosphate (from uridine 5-triphosphate), a reaction catalyzed by the N-terminal domain. This is Bifunctional protein GlmU from Pseudoalteromonas translucida (strain TAC 125).